Consider the following 120-residue polypeptide: Spermidine export protein MdtJ (120 aa).

A run of 4 helical transmembrane segments spans residues 1 to 21 (MFYWILLALAIVAEITGTLSM), 31 to 51 (TGFILMLVMISLSYIFLSFAV), 54 to 74 (IALGVAYALWEGIGILLITLF), and 81 to 101 (EALSTMKIAGLATLVVGIVLI).

The protein belongs to the drug/metabolite transporter (DMT) superfamily. Small multidrug resistance (SMR) (TC 2.A.7.1) family. MdtJ subfamily. Forms a complex with MdtI.

It is found in the cell inner membrane. Catalyzes the excretion of spermidine. This chain is Spermidine export protein MdtJ, found in Enterobacter sp. (strain 638).